The following is a 457-amino-acid chain: UDP-N-acetylmuramate--L-alanine ligase (457 aa).

Position 118–124 (118–124 (GTHGKTT)) interacts with ATP.

It belongs to the MurCDEF family.

Its subcellular location is the cytoplasm. The enzyme catalyses UDP-N-acetyl-alpha-D-muramate + L-alanine + ATP = UDP-N-acetyl-alpha-D-muramoyl-L-alanine + ADP + phosphate + H(+). The protein operates within cell wall biogenesis; peptidoglycan biosynthesis. Functionally, cell wall formation. In Clostridium perfringens (strain 13 / Type A), this protein is UDP-N-acetylmuramate--L-alanine ligase.